Consider the following 105-residue polypeptide: Large ribosomal subunit protein uL24 (105 aa).

Belongs to the universal ribosomal protein uL24 family. In terms of assembly, part of the 50S ribosomal subunit.

In terms of biological role, one of two assembly initiator proteins, it binds directly to the 5'-end of the 23S rRNA, where it nucleates assembly of the 50S subunit. Functionally, one of the proteins that surrounds the polypeptide exit tunnel on the outside of the subunit. This is Large ribosomal subunit protein uL24 from Psychrobacter sp. (strain PRwf-1).